Here is a 334-residue protein sequence, read N- to C-terminus: Spermatogenesis-associated protein 32 (334 aa).

The interval 24–98 (SDHHRHHHHH…TESPEQQNYR (75 aa)) is disordered. The span at 37-47 (ENEDEDTEVEA) shows a compositional bias: acidic residues. Residues 48–60 (ELPRTEPPPKVDP) are compositionally biased toward basic and acidic residues. Polar residues predominate over residues 77-98 (SKTTPETEGDSYTESPEQQNYR). Phosphoserine occurs at positions 135 and 138.

In terms of assembly, interacts with syntaxin-1 and ACTB. As to expression, highly expressed in the testis and weakly in the brain and heart.

The protein is Spermatogenesis-associated protein 32 (Spata32) of Mus musculus (Mouse).